We begin with the raw amino-acid sequence, 537 residues long: Protoporphyrinogen oxidase 1, chloroplastic (537 aa).

The transit peptide at 1-34 (MELSLLRPTTQSLLPSFSKPNLRLNVYKPLRLRC) directs the protein to the chloroplast. Position 35 is an N-acetylserine (serine 35). Residues 63-68 (GGGISG), 90-91 (EA), and 112-115 (GPNS) contribute to the FAD site. Residues 256–268 (RKNAPKAERDPRL) are compositionally biased toward basic and acidic residues. The disordered stretch occupies residues 256–275 (RKNAPKAERDPRLPKPQGQT). 511 to 513 (VAL) serves as a coordination point for FAD.

It belongs to the protoporphyrinogen/coproporphyrinogen oxidase family. Protoporphyrinogen oxidase subfamily. Requires FAD as cofactor. Expressed at high levels in the leaves and at low levels in the roots and floral buds.

It is found in the plastid. Its subcellular location is the chloroplast. It carries out the reaction protoporphyrinogen IX + 3 O2 = protoporphyrin IX + 3 H2O2. The protein operates within porphyrin-containing compound metabolism; protoporphyrin-IX biosynthesis; protoporphyrin-IX from protoporphyrinogen-IX: step 1/1. It participates in porphyrin-containing compound metabolism; chlorophyll biosynthesis. With respect to regulation, inhibited by acifluorfen. Functionally, catalyzes the 6-electron oxidation of protoporphyrinogen-IX to form protoporphyrin-IX. In Arabidopsis thaliana (Mouse-ear cress), this protein is Protoporphyrinogen oxidase 1, chloroplastic (PPOX1).